Reading from the N-terminus, the 37-residue chain is Cytochrome b6-f complex subunit 5 (37 aa).

Residues 5–25 (LPSGIVLGLIPITLAGLFVTA) form a helical membrane-spanning segment.

It belongs to the PetG family. The 4 large subunits of the cytochrome b6-f complex are cytochrome b6, subunit IV (17 kDa polypeptide, PetD), cytochrome f and the Rieske protein, while the 4 small subunits are PetG, PetL, PetM and PetN. The complex functions as a dimer.

It is found in the plastid. The protein localises to the chloroplast thylakoid membrane. Its function is as follows. Component of the cytochrome b6-f complex, which mediates electron transfer between photosystem II (PSII) and photosystem I (PSI), cyclic electron flow around PSI, and state transitions. PetG is required for either the stability or assembly of the cytochrome b6-f complex. The protein is Cytochrome b6-f complex subunit 5 of Pinus thunbergii (Japanese black pine).